Reading from the N-terminus, the 970-residue chain is uncharacterized protein (970 aa).

The interval glutamine 942 to histidine 970 is disordered. Residues serine 953–histidine 970 show a composition bias toward basic and acidic residues.

This is an uncharacterized protein from Frog virus 3 (isolate Goorha) (FV-3).